Here is a 413-residue protein sequence, read N- to C-terminus: Alpha-1-antitrypsin-like protein CM55-MS (413 aa).

The first 24 residues, Met1–Ala24, serve as a signal peptide directing secretion. Gln25 bears the Pyrrolidone carboxylic acid mark. Asn65, Asn102, Asn165, and Asn266 each carry an N-linked (GlcNAc...) asparagine glycan. The interval Gly368–Arg387 is RCL.

Belongs to the serpin family. As to expression, expressed in liver.

The protein resides in the secreted. Functionally, serine protease inhibitor. This Tamias sibiricus (Siberian chipmunk) protein is Alpha-1-antitrypsin-like protein CM55-MS.